A 291-amino-acid chain; its full sequence is tRNA U34 carboxymethyltransferase (291 aa).

Carboxy-S-adenosyl-L-methionine is bound by residues K61, W75, K80, G100, 122-124 (DPS), 149-150 (VE), Y169, and R284.

This sequence belongs to the class I-like SAM-binding methyltransferase superfamily. CmoB family. Homotetramer.

The catalysed reaction is carboxy-S-adenosyl-L-methionine + 5-hydroxyuridine(34) in tRNA = 5-carboxymethoxyuridine(34) in tRNA + S-adenosyl-L-homocysteine + H(+). Catalyzes carboxymethyl transfer from carboxy-S-adenosyl-L-methionine (Cx-SAM) to 5-hydroxyuridine (ho5U) to form 5-carboxymethoxyuridine (cmo5U) at position 34 in tRNAs. This is tRNA U34 carboxymethyltransferase from Campylobacter jejuni subsp. jejuni serotype O:6 (strain 81116 / NCTC 11828).